The chain runs to 239 residues: Ribonuclease HII (239 aa).

One can recognise an RNase H type-2 domain in the interval 18–231 (KIIVGLDEAG…SKNLLKEIEE (214 aa)). A divalent metal cation contacts are provided by Asp-24, Glu-25, and Asp-125.

This sequence belongs to the RNase HII family. The cofactor is Mn(2+). Mg(2+) serves as cofactor.

Its subcellular location is the cytoplasm. The enzyme catalyses Endonucleolytic cleavage to 5'-phosphomonoester.. Endonuclease that specifically degrades the RNA of RNA-DNA hybrids. This chain is Ribonuclease HII, found in Methanococcus maripaludis (strain C6 / ATCC BAA-1332).